A 201-amino-acid polypeptide reads, in one-letter code: Cell division protein SepF (201 aa).

Residues 27–38 show a composition bias toward basic and acidic residues; it reads VQERTSVQRDSR. The tract at residues 27-99 is disordered; the sequence is VQERTSVQRD…PRIQNKDSVR (73 aa). 2 stretches are compositionally biased toward polar residues: residues 43–54 and 82–92; these read QEASQRSHMTNS and DNSYQQATPRI.

It belongs to the SepF family. In terms of assembly, homodimer. Interacts with FtsZ.

It localises to the cytoplasm. Its function is as follows. Cell division protein that is part of the divisome complex and is recruited early to the Z-ring. Probably stimulates Z-ring formation, perhaps through the cross-linking of FtsZ protofilaments. Its function overlaps with FtsA. This chain is Cell division protein SepF, found in Streptococcus agalactiae serotype III (strain NEM316).